The primary structure comprises 293 residues: Undecaprenyl-diphosphatase (293 aa).

The next 7 membrane-spanning stretches (helical) occupy residues 57–77 (PGVS…IVYF), 106–126 (LAIA…KLFW), 134–154 (IRSL…LALA), 172–192 (GFVV…RSGS), 212–232 (FLLG…DAFA), 239–259 (VLPL…AIDW), and 268–288 (STWI…AWWL).

It belongs to the UppP family.

It localises to the cell inner membrane. The enzyme catalyses di-trans,octa-cis-undecaprenyl diphosphate + H2O = di-trans,octa-cis-undecaprenyl phosphate + phosphate + H(+). Catalyzes the dephosphorylation of undecaprenyl diphosphate (UPP). Confers resistance to bacitracin. This chain is Undecaprenyl-diphosphatase, found in Prochlorococcus marinus (strain MIT 9303).